A 376-amino-acid polypeptide reads, in one-letter code: Protein RecA (376 aa).

79–86 contacts ATP; it reads GPESSGKT. The disordered stretch occupies residues 357–376; that stretch reads AAARAATDKPVETKGANAAA.

This sequence belongs to the RecA family.

The protein resides in the cytoplasm. Its function is as follows. Can catalyze the hydrolysis of ATP in the presence of single-stranded DNA, the ATP-dependent uptake of single-stranded DNA by duplex DNA, and the ATP-dependent hybridization of homologous single-stranded DNAs. It interacts with LexA causing its activation and leading to its autocatalytic cleavage. This is Protein RecA from Synechococcus sp. (strain CC9902).